We begin with the raw amino-acid sequence, 214 residues long: ATP-dependent Clp protease proteolytic subunit 2 (214 aa).

Ser110 (nucleophile) is an active-site residue. Residue His135 is part of the active site.

Belongs to the peptidase S14 family. Fourteen ClpP subunits assemble into 2 heptameric rings which stack back to back to give a disk-like structure with a central cavity, resembling the structure of eukaryotic proteasomes.

It is found in the cytoplasm. The enzyme catalyses Hydrolysis of proteins to small peptides in the presence of ATP and magnesium. alpha-casein is the usual test substrate. In the absence of ATP, only oligopeptides shorter than five residues are hydrolyzed (such as succinyl-Leu-Tyr-|-NHMec, and Leu-Tyr-Leu-|-Tyr-Trp, in which cleavage of the -Tyr-|-Leu- and -Tyr-|-Trp bonds also occurs).. Functionally, cleaves peptides in various proteins in a process that requires ATP hydrolysis. Has a chymotrypsin-like activity. Plays a major role in the degradation of misfolded proteins. The protein is ATP-dependent Clp protease proteolytic subunit 2 of Mycobacterium leprae (strain TN).